Reading from the N-terminus, the 216-residue chain is N-(5'-phosphoribosyl)anthranilate isomerase (216 aa).

The protein belongs to the TrpF family.

It carries out the reaction N-(5-phospho-beta-D-ribosyl)anthranilate = 1-(2-carboxyphenylamino)-1-deoxy-D-ribulose 5-phosphate. It functions in the pathway amino-acid biosynthesis; L-tryptophan biosynthesis; L-tryptophan from chorismate: step 3/5. The sequence is that of N-(5'-phosphoribosyl)anthranilate isomerase from Methanopyrus kandleri (strain AV19 / DSM 6324 / JCM 9639 / NBRC 100938).